The chain runs to 232 residues: 5'-methylthioadenosine/S-adenosylhomocysteine nucleosidase (232 aa).

Glu-12 (proton acceptor) is an active-site residue. Residues Gly-78, Met-153, and 174 to 175 (ME) each bind substrate. Asp-198 serves as the catalytic Proton donor.

Belongs to the PNP/UDP phosphorylase family. MtnN subfamily.

It carries out the reaction S-adenosyl-L-homocysteine + H2O = S-(5-deoxy-D-ribos-5-yl)-L-homocysteine + adenine. The catalysed reaction is S-methyl-5'-thioadenosine + H2O = 5-(methylsulfanyl)-D-ribose + adenine. The enzyme catalyses 5'-deoxyadenosine + H2O = 5-deoxy-D-ribose + adenine. Its pathway is amino-acid biosynthesis; L-methionine biosynthesis via salvage pathway; S-methyl-5-thio-alpha-D-ribose 1-phosphate from S-methyl-5'-thioadenosine (hydrolase route): step 1/2. Functionally, catalyzes the irreversible cleavage of the glycosidic bond in both 5'-methylthioadenosine (MTA) and S-adenosylhomocysteine (SAH/AdoHcy) to adenine and the corresponding thioribose, 5'-methylthioribose and S-ribosylhomocysteine, respectively. Also cleaves 5'-deoxyadenosine, a toxic by-product of radical S-adenosylmethionine (SAM) enzymes, into 5-deoxyribose and adenine. This chain is 5'-methylthioadenosine/S-adenosylhomocysteine nucleosidase, found in Hydrogenovibrio crunogenus (strain DSM 25203 / XCL-2) (Thiomicrospira crunogena).